The chain runs to 340 residues: L-threonine 3-dehydrogenase (340 aa).

Cys38 contacts Zn(2+). Residues Thr40 and His43 each act as charge relay system in the active site. Residues His63, Glu64, Cys93, Cys96, Cys99, and Cys107 each coordinate Zn(2+). Residues Ile175, Asp195, Arg200, 261 to 263 (LGI), and 285 to 286 (IY) each bind NAD(+).

The protein belongs to the zinc-containing alcohol dehydrogenase family. As to quaternary structure, homotetramer. Requires Zn(2+) as cofactor.

The protein resides in the cytoplasm. The catalysed reaction is L-threonine + NAD(+) = (2S)-2-amino-3-oxobutanoate + NADH + H(+). The protein operates within amino-acid degradation; L-threonine degradation via oxydo-reductase pathway; glycine from L-threonine: step 1/2. Catalyzes the NAD(+)-dependent oxidation of L-threonine to 2-amino-3-ketobutyrate. In Xanthomonas axonopodis pv. citri (strain 306), this protein is L-threonine 3-dehydrogenase.